Reading from the N-terminus, the 232-residue chain is Ribonuclease 3 (232 aa).

The 130-residue stretch at Ala-7 to Gly-136 folds into the RNase III domain. Glu-49 contributes to the Mg(2+) binding site. Asp-53 is a catalytic residue. Residues Asn-122 and Glu-125 each coordinate Mg(2+). Glu-125 is an active-site residue. Residues Asp-163–Glu-232 enclose the DRBM domain.

The protein belongs to the ribonuclease III family. In terms of assembly, homodimer. The cofactor is Mg(2+).

Its subcellular location is the cytoplasm. It catalyses the reaction Endonucleolytic cleavage to 5'-phosphomonoester.. Its function is as follows. Digests double-stranded RNA. Involved in the processing of primary rRNA transcript to yield the immediate precursors to the large and small rRNAs (23S and 16S). Processes some mRNAs, and tRNAs when they are encoded in the rRNA operon. Processes pre-crRNA and tracrRNA of type II CRISPR loci if present in the organism. This Syntrophotalea carbinolica (strain DSM 2380 / NBRC 103641 / GraBd1) (Pelobacter carbinolicus) protein is Ribonuclease 3.